We begin with the raw amino-acid sequence, 727 residues long: ABC transporter G family member 6 (727 aa).

One can recognise an ABC transporter domain in the interval 68 to 333 (LSFTDLTYSV…FAEFGHPIPE (266 aa)). 126–133 (GASGSGKS) lines the ATP pocket. The 211-residue stretch at 421-631 (VELAVLAKRS…PYEAVLLNEF (211 aa)) folds into the ABC transmembrane type-2 domain. The next 6 membrane-spanning stretches (helical) occupy residues 440–460 (LFGIRLGAVLVTGFILATMFW), 475–495 (CFAFAMSTTFYTCADALPVFL), 517–537 (LSHSLVALPSLIILSLAFAAI), 560–580 (ASFWAGSSFVTFLSGVVPHVM), 581–601 (LGYTIVVAILAYFLLFSGFFI), and 700–720 (LWVTVAWGFFFRILFYFSLLL).

The protein belongs to the ABC transporter superfamily. ABCG family. Eye pigment precursor importer (TC 3.A.1.204) subfamily.

It is found in the membrane. The chain is ABC transporter G family member 6 (ABCG6) from Arabidopsis thaliana (Mouse-ear cress).